The primary structure comprises 118 residues: Large ribosomal subunit protein bL21c (118 aa).

It belongs to the bacterial ribosomal protein bL21 family. Part of the 50S ribosomal subunit.

The protein resides in the plastid. It is found in the chloroplast. Functionally, this protein binds to 23S rRNA. The polypeptide is Large ribosomal subunit protein bL21c (Anthoceros angustus (Hornwort)).